A 254-amino-acid chain; its full sequence is Probable glucose-1-phosphate cytidylyltransferase (254 aa).

Substrate contacts are provided by residues 6–10, 11–13, K23, T103, R108, and G126; these read LCGGK and GTR. D127 and D232 together coordinate Mg(2+).

Belongs to the glucose-1-phosphate cytidylyltransferase family. Mg(2+) serves as cofactor.

It carries out the reaction alpha-D-glucose 1-phosphate + CTP + H(+) = CDP-D-glucose + diphosphate. In terms of biological role, catalyzes the transfer of a CMP moiety from CTP to glucose 1-phosphate. This Bacillus subtilis (strain 168) protein is Probable glucose-1-phosphate cytidylyltransferase (yfnH).